The primary structure comprises 140 residues: Myrosinase 2 (140 aa).

Arg-70 serves as the catalytic Nucleophile. N-linked (GlcNAc...) asparagine glycosylation is found at Asn-114 and Asn-127.

This sequence belongs to the glycosyl hydrolase 1 family. In terms of assembly, homodimer.

It carries out the reaction a thioglucoside + H2O = a sugar + a thiol.. With respect to regulation, inhibited by ascorbate. In terms of biological role, degradation of glucosinolates (glucose residue linked by a thioglucoside bound to an amino acid derivative) to glucose, sulfate and any of the products: thiocyanates, isothiocyanates, nitriles, epithionitriles or oxazolidine-2-thiones. The sequence is that of Myrosinase 2 from Brevicoryne brassicae (Mealy cabbage aphid).